The chain runs to 260 residues: Pyridoxine 5'-phosphate synthase (260 aa).

N7 and R18 together coordinate 3-amino-2-oxopropyl phosphate. Residue H43 is the Proton acceptor of the active site. 1-deoxy-D-xylulose 5-phosphate is bound by residues R45 and H50. E83 serves as the catalytic Proton acceptor. Position 113 (T113) interacts with 1-deoxy-D-xylulose 5-phosphate. H208 acts as the Proton donor in catalysis. 3-amino-2-oxopropyl phosphate is bound by residues D209 and 230-231 (GH).

The protein belongs to the PNP synthase family. Homooctamer; tetramer of dimers.

The protein resides in the cytoplasm. It catalyses the reaction 3-amino-2-oxopropyl phosphate + 1-deoxy-D-xylulose 5-phosphate = pyridoxine 5'-phosphate + phosphate + 2 H2O + H(+). Its pathway is cofactor biosynthesis; pyridoxine 5'-phosphate biosynthesis; pyridoxine 5'-phosphate from D-erythrose 4-phosphate: step 5/5. Its function is as follows. Catalyzes the complicated ring closure reaction between the two acyclic compounds 1-deoxy-D-xylulose-5-phosphate (DXP) and 3-amino-2-oxopropyl phosphate (1-amino-acetone-3-phosphate or AAP) to form pyridoxine 5'-phosphate (PNP) and inorganic phosphate. This is Pyridoxine 5'-phosphate synthase from Leptospira biflexa serovar Patoc (strain Patoc 1 / Ames).